The chain runs to 1375 residues: DNA-directed RNA polymerase subunit beta' (1375 aa).

Zn(2+) is bound by residues C70, C72, C85, and C88. Mg(2+)-binding residues include D461, D463, and D465. C797, C871, C878, and C881 together coordinate Zn(2+).

Belongs to the RNA polymerase beta' chain family. As to quaternary structure, the RNAP catalytic core consists of 2 alpha, 1 beta, 1 beta' and 1 omega subunit. When a sigma factor is associated with the core the holoenzyme is formed, which can initiate transcription. The cofactor is Mg(2+). Requires Zn(2+) as cofactor.

The enzyme catalyses RNA(n) + a ribonucleoside 5'-triphosphate = RNA(n+1) + diphosphate. DNA-dependent RNA polymerase catalyzes the transcription of DNA into RNA using the four ribonucleoside triphosphates as substrates. The protein is DNA-directed RNA polymerase subunit beta' of Neorickettsia sennetsu (strain ATCC VR-367 / Miyayama) (Ehrlichia sennetsu).